A 476-amino-acid polypeptide reads, in one-letter code: Transposase for transposon Tn5 (476 aa).

The interaction with DNA stretch occupies residues 1–70 (MITSALHRAA…YRFIRNPNVS (70 aa)). Mg(2+) contacts are provided by Asp-97 and Asp-188. Interaction with DNA stretches follow at residues 237–255 (YQIS…KRKN) and 319–348 (YTHR…EPDN). Mg(2+) is bound at residue Glu-326. The important for dimerization stretch occupies residues 369 to 476 (SFTLPQALRA…KDLMAQGIKI (108 aa)).

It belongs to the transposase 11 family. As to quaternary structure, monomer. Homodimer of tnp (isoform 1), and heterodimer of tnp (isoform 1) and inh (isoform 2). Mg(2+) serves as cofactor.

In terms of biological role, mediates transposition of transposon Tn5 by a 'cut and paste' mechanism. First, the monomeric transposase binds the 19 bp inverted DNA repeats flanking the transposon. Then, dimerization of the DNA-bound transposase creates a synaptic DNA complex. After nicking of the first DNA strand, excision of the transposon proceeds through a series of intermediates. The transposase then mediates the insertion of the transposon at a new site by strand transfer. The activity of the wild-type transposase is very low, and is further inhibited by dimerization with the transposase inhibitor (inh). This is Transposase for transposon Tn5 (tnpA) from Escherichia coli.